The sequence spans 153 residues: Flagellar assembly factor FliW (153 aa).

It belongs to the FliW family. Interacts with translational regulator CsrA and flagellin(s).

The protein localises to the cytoplasm. Functionally, acts as an anti-CsrA protein, binds CsrA and prevents it from repressing translation of its target genes, one of which is flagellin. Binds to flagellin and participates in the assembly of the flagellum. This is Flagellar assembly factor FliW from Leptospira biflexa serovar Patoc (strain Patoc 1 / Ames).